A 669-amino-acid polypeptide reads, in one-letter code: MSKEIAKKRIEELRDLLNTFNYQYHVLDNPSVSDAEYDRNMQELIKLEAENPEFMSEDSPSVRVGGTVLDIFEKVTHKSPMLSLGNAFNEGDLRDFDRRVRQGIDGANVRYICELKIDGLAVSLHYEKGRFIQGATRGDGVTGEDITQNLKTIKAIPLRLNEEVTLEARGEAYMPKRSFVKLNEEKEQNGEDVFANPRNAAAGSIRQLDPKIAAKRNLSMFVYGLANVEEKTIPSHSESLDFLGELGFKTNPNRRTCETIEEVIAYVEEWQEKRPHLDYEIDGIVIKVDDVALQESLGTTAKSPRWAIAYKFPAEEVVTRLTGIELSVGRTGVVTPTAELEPVRVAGTIVRRASLHNEDLIREKDIRIGDYVVVKKAGDIIPEVVNVIFDKRTGEEEEYRMPTHCPACESELVRLEEEVALRCINPTCPAQIREGLIHFVSRNAMNIDGLGERVITQLFDADYIRTFADLYALTKEQLLQLERFGEKSATNLIQAIENSKENSLERLLFGLGIRHVGAKAARTFAEHFETMDELVKATEEELKAINEIGEKMAQSVVTYFDNEDVLELLQQFKEYGVNMTYKGIKIADLQNVESYFAGKTVVLTGKLEVMGRSEAKKKIEALGGKVTGSVSKSTDLVVAGEAAGSKLAQAEKHNVEVWNEERFLQELNK.

NAD(+) contacts are provided by residues 34-38 (DAEYD), 83-84 (SL), and Glu114. The active-site N6-AMP-lysine intermediate is the Lys116. NAD(+)-binding residues include Arg137, Glu171, Lys287, and Lys311. Residues Cys405, Cys408, Cys423, and Cys428 each contribute to the Zn(2+) site. Residues 591-669 (NVESYFAGKT…EERFLQELNK (79 aa)) enclose the BRCT domain.

It belongs to the NAD-dependent DNA ligase family. LigA subfamily. Mg(2+) is required as a cofactor. The cofactor is Mn(2+).

The catalysed reaction is NAD(+) + (deoxyribonucleotide)n-3'-hydroxyl + 5'-phospho-(deoxyribonucleotide)m = (deoxyribonucleotide)n+m + AMP + beta-nicotinamide D-nucleotide.. DNA ligase that catalyzes the formation of phosphodiester linkages between 5'-phosphoryl and 3'-hydroxyl groups in double-stranded DNA using NAD as a coenzyme and as the energy source for the reaction. It is essential for DNA replication and repair of damaged DNA. The chain is DNA ligase from Bacillus cereus (strain ATCC 14579 / DSM 31 / CCUG 7414 / JCM 2152 / NBRC 15305 / NCIMB 9373 / NCTC 2599 / NRRL B-3711).